Reading from the N-terminus, the 84-residue chain is Large ribosomal subunit protein bL27 (84 aa).

The interval 1-22 (MAHKKAGGSTRNGRDSESKRLG) is disordered.

Belongs to the bacterial ribosomal protein bL27 family.

The polypeptide is Large ribosomal subunit protein bL27 (Shewanella loihica (strain ATCC BAA-1088 / PV-4)).